The following is a 503-amino-acid chain: NAD(P)H-quinone oxidoreductase chain 4, chloroplastic (503 aa).

Helical transmembrane passes span 4 to 24 (FPWL…IFFL), 37 to 57 (ICIC…HFQL), 87 to 107 (IGPT…AWPV), 134 to 154 (LLLF…LLSM), 167 to 187 (FILY…GMGL), 208 to 228 (ALEI…SPII), 242 to 262 (HYST…YGLV), 272 to 292 (AHSI…IYAA), 305 to 325 (IAYS…SITD), 330 to 350 (GAIL…FLAG), 386 to 406 (LALP…GIIT), 416 to 436 (ILIT…SLSM), and 462 to 482 (LFVS…PDFV).

Belongs to the complex I subunit 4 family.

The protein localises to the plastid. The protein resides in the chloroplast thylakoid membrane. The enzyme catalyses a plastoquinone + NADH + (n+1) H(+)(in) = a plastoquinol + NAD(+) + n H(+)(out). The catalysed reaction is a plastoquinone + NADPH + (n+1) H(+)(in) = a plastoquinol + NADP(+) + n H(+)(out). The sequence is that of NAD(P)H-quinone oxidoreductase chain 4, chloroplastic from Drimys granadensis.